The primary structure comprises 63 residues: Toxin S6C6 (63 aa).

5 disulfide bridges follow: cysteine 3/cysteine 24, cysteine 6/cysteine 11, cysteine 17/cysteine 39, cysteine 43/cysteine 55, and cysteine 56/cysteine 61.

Belongs to the three-finger toxin family. Ancestral subfamily. Orphan group XIX sub-subfamily. In terms of tissue distribution, expressed by the venom gland.

The protein resides in the secreted. Functionally, may enhance presynaptic acetylcholine release. In Dendroaspis jamesoni kaimosae (Eastern Jameson's mamba), this protein is Toxin S6C6.